The sequence spans 469 residues: tRNA modification GTPase MnmE (469 aa).

Residues R38, E95, and R134 each contribute to the (6S)-5-formyl-5,6,7,8-tetrahydrofolate site. A TrmE-type G domain is found at 230–392; it reads GIRVALVGPP…LRRGLAALVD (163 aa). GTP-binding positions include 240 to 245, 259 to 265, and 284 to 287; these read NAGKSS, SAQAGTT, and DTAG. The Mg(2+) site is built by S244 and T265. (6S)-5-formyl-5,6,7,8-tetrahydrofolate is bound at residue K468.

The protein belongs to the TRAFAC class TrmE-Era-EngA-EngB-Septin-like GTPase superfamily. TrmE GTPase family. As to quaternary structure, homodimer. Heterotetramer of two MnmE and two MnmG subunits. The cofactor is K(+).

The protein resides in the cytoplasm. Its function is as follows. Exhibits a very high intrinsic GTPase hydrolysis rate. Involved in the addition of a carboxymethylaminomethyl (cmnm) group at the wobble position (U34) of certain tRNAs, forming tRNA-cmnm(5)s(2)U34. This Halorhodospira halophila (strain DSM 244 / SL1) (Ectothiorhodospira halophila (strain DSM 244 / SL1)) protein is tRNA modification GTPase MnmE.